The following is a 448-amino-acid chain: Probable intron-encoded endonuclease bI1 (448 aa).

The segment at 1-132 (MRLLKSHPLL…LMMATAFLGY (132 aa)) is cob exon 1 encoded. 3 helical membrane-spanning segments follow: residues 32 to 52 (FGSL…TLAM), 86 to 106 (ASAF…YGSY), and 112 to 132 (LVWA…FLGY). The segment at 133–448 (QHSPKWFDIS…QWIVEDFSDK (316 aa)) is cob intron 1 encoded. A GIY-YIG domain is found at 230–321 (DLSGVYMIIN…LKLLVPNYNI (92 aa)).

It to endonucleases of group I introns of fungi and phage. In terms of processing, the mature protein may arise from proteolytic cleavage of an in-frame translation of cob exon 1 plus intron 1, containing the bI1 open reading frame.

It localises to the mitochondrion inner membrane. In terms of biological role, mitochondrial DNA endonuclease involved in intron homing. In Neurospora crassa (strain ATCC 24698 / 74-OR23-1A / CBS 708.71 / DSM 1257 / FGSC 987), this protein is Probable intron-encoded endonuclease bI1 (bI1).